A 1217-amino-acid chain; its full sequence is DNA-directed RNA polymerase subunit beta' (1217 aa).

Zn(2+)-binding residues include C60, C62, C75, and C78. Mg(2+) is bound by residues D449, D451, and D453. Positions 821, 895, 902, and 905 each coordinate Zn(2+).

It belongs to the RNA polymerase beta' chain family. As to quaternary structure, the RNAP catalytic core consists of 2 alpha, 1 beta, 1 beta' and 1 omega subunit. When a sigma factor is associated with the core the holoenzyme is formed, which can initiate transcription. Mg(2+) is required as a cofactor. Zn(2+) serves as cofactor.

It carries out the reaction RNA(n) + a ribonucleoside 5'-triphosphate = RNA(n+1) + diphosphate. Functionally, DNA-dependent RNA polymerase catalyzes the transcription of DNA into RNA using the four ribonucleoside triphosphates as substrates. The sequence is that of DNA-directed RNA polymerase subunit beta' from Lactobacillus helveticus (strain DPC 4571).